The following is a 423-amino-acid chain: Voltage-dependent calcium channel gamma-8 subunit (423 aa).

The next 4 membrane-spanning stretches (helical) occupy residues 19–39, 127–147, 157–177, and 207–227; these read VQVLLTTIGAFSAFGLMTIAI, SSIFPILSAILLLLGGVCVAA, IILGAGILFVAAGLSNIIGVI, and FGGLSFILAEVIGVLAVNIYI. Phosphoserine occurs at positions 251 and 254. Residues 271–304 form a disordered region; sequence RRSRSSSRGSSEASPSRDASPGGPGGPGFASTDI. Residues 276–287 are compositionally biased toward low complexity; it reads SSRGSSEASPSR. Residues 318-338 form a helical membrane-spanning segment; that stretch reads VAAGLASAGGGGSGAGVGAYG. Disordered stretches follow at residues 342–363 and 378–423; these read GAAGGGGAGSERDRGSSAGFLT and VTVT…TTPV. The span at 384 to 399 shows a compositional bias: pro residues; the sequence is PAAPAPAPAPPAPAAP. A compositionally biased stretch (polar residues) spans 410–423; it reads ASNTNTLNRKTTPV.

The protein belongs to the PMP-22/EMP/MP20 family. CACNG subfamily. As to quaternary structure, interacts with CACNA1C. Identified in a complex with the L-type calcium channel subunits CACNA1C, CACNA2D1 and either CACNB1 or CACNB2. Acts as an auxiliary subunit for AMPA-selective glutamate receptors (AMPARs). Found in a complex with GRIA1, GRIA2, GRIA3, GRIA4, CNIH2, CNIH3, CACNG2, CACNG3, CACNG4, CACNG5 and CACNG7. Interacts with CNIH2. Found in a complex with GRIA1, GRIA2, GRIA3, GRIA4, DLG4 and CNIH2. Palmitoylated. Probably palmitoylated by ZDHHC3 and ZDHHC7.

It is found in the cell membrane. It localises to the postsynaptic density membrane. In terms of biological role, regulates the activity of L-type calcium channels that contain CACNA1C as pore-forming subunit. Regulates the trafficking and gating properties of AMPA-selective glutamate receptors (AMPARs). Promotes their targeting to the cell membrane and synapses and modulates their gating properties by slowing their rates of activation, deactivation and desensitization and by mediating their resensitization. Does not show subunit-specific AMPA receptor regulation and regulates all AMPAR subunits. Thought to stabilize the calcium channel in an inactivated (closed) state. The chain is Voltage-dependent calcium channel gamma-8 subunit from Mus musculus (Mouse).